The following is a 344-amino-acid chain: MITQRQNDILNLIVELFTQTHEPVGSKALQRTIDSSSATIRNDMAKLEKLGLLEKAHTSSGRMPSPAGFKYFVEHSLRLDSIDEQDIYHVIKAFDFEAFKLEDMLQKASHILSEMTGYTSVILDVEPARQRLTGFDVVQLSNHDALAVMTLDESKPVTVQFAIPRNFLTRDLIAFKAIVEERLLDSSVIDIHYKLRTEIPQIVQKYFVTTDNVLQLFDYVFSELFLETVFVAGKVNSLTYSDLSTYQFLDNEQQVAISLRQSLKEGEMASVQVADSQEAALADVSVLTHKFLIPYRGFGLLSLIGPIDMDYRRSVSLVNIIGKVLAAKLGDYYRYLNSNHYEVH.

It belongs to the HrcA family.

In terms of biological role, negative regulator of class I heat shock genes (grpE-dnaK-dnaJ and groELS operons). Prevents heat-shock induction of these operons. In Streptococcus pyogenes serotype M3 (strain ATCC BAA-595 / MGAS315), this protein is Heat-inducible transcription repressor hrcA.